The primary structure comprises 169 residues: S-ribosylhomocysteine lyase (169 aa).

3 residues coordinate Fe cation: His-54, His-58, and Cys-128.

Belongs to the LuxS family. As to quaternary structure, homodimer. Fe cation serves as cofactor.

It carries out the reaction S-(5-deoxy-D-ribos-5-yl)-L-homocysteine = (S)-4,5-dihydroxypentane-2,3-dione + L-homocysteine. Its function is as follows. Involved in the synthesis of autoinducer 2 (AI-2) which is secreted by bacteria and is used to communicate both the cell density and the metabolic potential of the environment. The regulation of gene expression in response to changes in cell density is called quorum sensing. Catalyzes the transformation of S-ribosylhomocysteine (RHC) to homocysteine (HC) and 4,5-dihydroxy-2,3-pentadione (DPD). This is S-ribosylhomocysteine lyase from Shewanella sp. (strain MR-7).